We begin with the raw amino-acid sequence, 218 residues long: Adenylate kinase (218 aa).

Residue 10–15 (GAGKGT) coordinates ATP. Residues 30 to 59 (STGDMLRAAVKQGTPLGQEAKKVMDAGGLV) are NMP. AMP contacts are provided by residues Thr-31, Arg-36, 57-59 (GLV), 85-88 (GFPR), and Gln-92. The LID stretch occupies residues 122 to 159 (GRRVHPASGRSYHVRFNPPKQEGLDDVTGEPLVQRDDD). ATP contacts are provided by residues Arg-123 and 132–133 (SY). Arg-156 and Arg-167 together coordinate AMP. Gly-203 contacts ATP.

This sequence belongs to the adenylate kinase family. Monomer.

The protein localises to the cytoplasm. It catalyses the reaction AMP + ATP = 2 ADP. Its pathway is purine metabolism; AMP biosynthesis via salvage pathway; AMP from ADP: step 1/1. Its function is as follows. Catalyzes the reversible transfer of the terminal phosphate group between ATP and AMP. Plays an important role in cellular energy homeostasis and in adenine nucleotide metabolism. The chain is Adenylate kinase from Bordetella petrii (strain ATCC BAA-461 / DSM 12804 / CCUG 43448).